Consider the following 316-residue polypeptide: Annexin A13 (316 aa).

Gly2 carries the N-myristoyl glycine lipid modification. Annexin repeat units lie at residues 14-85 (FDVD…ALLD), 86-157 (RPSE…SLLQ), 169-241 (DLAG…TLVR), and 245-316 (DQEG…ALLH).

This sequence belongs to the annexin family. Monomer and homodimer. In terms of tissue distribution, detected in intestine, and at much lower levels also in kidney (at protein level).

It localises to the apical cell membrane. It is found in the cell membrane. The protein localises to the cytoplasmic vesicle. Its function is as follows. Binds to membranes enriched in phosphatidylserine or phosphatidylglycerol in a calcium-dependent manner. Half-maximal membrane binding requires about 60 uM calcium. Does not bind to membranes that lack phospholipids with an acidic headgroup. Binds to membranes enriched in phosphatidylserine or phosphatidylglycerol in a calcium-dependent manner, but requires higher calcium levels for membrane binding than isoform A. Half-maximal membrane binding requires about 320 uM calcium. May play a role in vesicular traffic to the apical plasma membrane. In Canis lupus familiaris (Dog), this protein is Annexin A13 (ANXA13).